Here is a 105-residue protein sequence, read N- to C-terminus: Antitoxin HigA-1 (105 aa).

An HTH cro/C1-type domain is found at 15 to 69 (LKVEFLEPMGITSKALAEAMGVHRNTVSNLINGGVLTAPVAIKLAAALGNTPEFW). Positions 27–46 (SKALAEAMGVHRNTVSNLIN) form a DNA-binding region, H-T-H motif.

Functionally, antitoxin component of a type II toxin-antitoxin (TA) system that counteracts the effect of the HigB-1 toxin. Binds to its own promoter and regulates transcription of the higB-1/higA-1 operon. The sequence is that of Antitoxin HigA-1 (higA-1) from Vibrio cholerae serotype O1 (strain ATCC 39315 / El Tor Inaba N16961).